Here is a 142-residue protein sequence, read N- to C-terminus: MAVAVTAVLFLAVVIAPQWTETKKPPRPSDTSDTSGTSGRDRRTMCPLSIPGIVQNCYATLNAFPSKECCKDLKTASKREVTCLCNNVIAHPDPLYTNTNQVNKACGVLDKYACDAGNSNGGATKKIVASMGLFGVVASLFF.

The N-terminal stretch at 1-22 (MAVAVTAVLFLAVVIAPQWTET) is a signal peptide. Residues 21 to 43 (ETKKPPRPSDTSDTSGTSGRDRR) form a disordered region. Over residues 29–38 (SDTSDTSGTS) the composition is skewed to low complexity. 4 cysteine pairs are disulfide-bonded: cysteine 46–cysteine 85, cysteine 57–cysteine 69, cysteine 70–cysteine 106, and cysteine 83–cysteine 114. Asparagine 120 is lipidated: GPI-anchor amidated asparagine. The propeptide at 121–142 (GGATKKIVASMGLFGVVASLFF) is removed in mature form.

Belongs to the plant LTP family.

The protein localises to the cell membrane. Functionally, probable lipid transfer protein. The chain is Non-specific lipid transfer protein GPI-anchored 34 from Arabidopsis thaliana (Mouse-ear cress).